The chain runs to 356 residues: Histidinol-phosphate aminotransferase (356 aa).

At Lys211 the chain carries N6-(pyridoxal phosphate)lysine.

Belongs to the class-II pyridoxal-phosphate-dependent aminotransferase family. Histidinol-phosphate aminotransferase subfamily. Homodimer. The cofactor is pyridoxal 5'-phosphate.

The catalysed reaction is L-histidinol phosphate + 2-oxoglutarate = 3-(imidazol-4-yl)-2-oxopropyl phosphate + L-glutamate. The protein operates within amino-acid biosynthesis; L-histidine biosynthesis; L-histidine from 5-phospho-alpha-D-ribose 1-diphosphate: step 7/9. This Aeromonas hydrophila subsp. hydrophila (strain ATCC 7966 / DSM 30187 / BCRC 13018 / CCUG 14551 / JCM 1027 / KCTC 2358 / NCIMB 9240 / NCTC 8049) protein is Histidinol-phosphate aminotransferase.